The chain runs to 388 residues: Probable aspartic-type endopeptidase MCYG_06955 (388 aa).

The signal sequence occupies residues 1–21 (MMGPFFYFTAYVSLLFAFTQA). N-linked (GlcNAc...) asparagine glycans are attached at residues asparagine 82 and asparagine 104. In terms of domain architecture, Peptidase A1 spans 96-384 (FVNEITVGND…DYDGPKIGFA (289 aa)). Residue aspartate 112 is part of the active site. 2 N-linked (GlcNAc...) asparagine glycosylation sites follow: asparagine 209 and asparagine 261. The active site involves aspartate 278. N-linked (GlcNAc...) asparagine glycans are attached at residues asparagine 315 and asparagine 320.

It belongs to the peptidase A1 family.

The protein localises to the secreted. Probable aspartic-type endopeptidase which contributes to virulence. This Arthroderma otae (strain ATCC MYA-4605 / CBS 113480) (Microsporum canis) protein is Probable aspartic-type endopeptidase MCYG_06955.